A 689-amino-acid chain; its full sequence is Solute carrier family 22 member 23 (689 aa).

Disordered stretches follow at residues 1–55 and 162–188; these read MAID…PLPA and TASWGTTSNRSNSSDTPPLPSPPGKGN. N-linked (GlcNAc...) asparagine glycosylation is present at Asn-24. Positions 165 to 177 are enriched in polar residues; the sequence is WGTTSNRSNSSDT. A run of 2 helical transmembrane segments spans residues 229-249 and 253-273; these read FSLLVGLIFGYLITGCIADWV and PVLLFSVIFILIFGLTVALSV. N-linked (GlcNAc...) asparagine glycosylation is present at Asn-274. 8 helical membrane passes run 283–303, 310–330, 339–359, 462–482, 489–509, 541–561, 572–592, and 601–621; these read FFEGFCLAGIILTLYALRIEL, FIITMVASFVAMAGQFLMPGL, VLQALIICPFLLMLLYWSIFP, ADYYTMASIALASCLAMCLVV, GGLLLFMILTALASLLQLGLL, IAFSIVGMFASHAVGSLSVFF, CGGLGLVLASAGFGMLTAPII, and FLHHIIFACCTLICIICILLL.

The protein belongs to the major facilitator (TC 2.A.1) superfamily. Organic cation transporter (TC 2.A.1.19) family. Expressed in many tissues, including brain, spinal cord, kidney, liver, eye, adipose tissue, lung, epididymis, adrenal gland, pineal gland, skeletal muscle, heart, spleen, thymus, ovary, uterus, testis and epididymis.

It localises to the membrane. The chain is Solute carrier family 22 member 23 (Slc22a23) from Rattus norvegicus (Rat).